We begin with the raw amino-acid sequence, 211 residues long: MQRMIEISSPFFLNPDELSTPADWAAVFGNANPLALEIGCGIGDFIARTAADNPGTNYIAIDFYNKGCDKTCRRLERLAIPNVRVVRDEARKFIVERIPKGSLCAVHINCPDPWPKMRHRKRRLVNREFAAFIREYLAPGGDFYFATDFDDYGIDVAEFMPGVEGYANMLAPDRYRHELEGYHLSKYMMKFMAEGKRIYFVHYRKTAEGAA.

Positions 37, 62, 89, and 112 each coordinate S-adenosyl-L-methionine. Residue aspartate 112 is part of the active site. 2 residues coordinate substrate: lysine 116 and aspartate 148.

The protein belongs to the class I-like SAM-binding methyltransferase superfamily. TrmB family.

The catalysed reaction is guanosine(46) in tRNA + S-adenosyl-L-methionine = N(7)-methylguanosine(46) in tRNA + S-adenosyl-L-homocysteine. The protein operates within tRNA modification; N(7)-methylguanine-tRNA biosynthesis. Catalyzes the formation of N(7)-methylguanine at position 46 (m7G46) in tRNA. This Geobacter metallireducens (strain ATCC 53774 / DSM 7210 / GS-15) protein is tRNA (guanine-N(7)-)-methyltransferase.